The following is a 390-amino-acid chain: Two-component response regulator ORR29 (390 aa).

The Response regulatory domain maps to 13-130; that stretch reads SAMVIDEDKC…TIKNLWQYVD (118 aa). Aspartate 65 bears the 4-aspartylphosphate mark. Positions 169-226 form a DNA-binding region, myb-like GARP; sequence KKYYLMWTPHLQKKFLHALQILGKDASPKNIKKIMGVDNIDCRQIAAHLQKHRLRLTK. 2 disordered regions span residues 233-271 and 303-339; these read FTTD…QPTE and SKHS…SGDH. Over residues 257-271 the composition is skewed to polar residues; the sequence is NASTLQPRSNTQPTE.

The protein belongs to the ARR family. Type-B subfamily. In terms of processing, two-component system major event consists of a His-to-Asp phosphorelay between a sensor histidine kinase (HK) and a response regulator (RR). In plants, the His-to-Asp phosphorelay involves an additional intermediate named Histidine-containing phosphotransfer protein (HPt). This multistep phosphorelay consists of a His-Asp-His-Asp sequential transfer of a phosphate group between first a His and an Asp of the HK protein, followed by the transfer to a conserved His of the HPt protein and finally the transfer to an Asp in the receiver domain of the RR protein.

The protein localises to the nucleus. Its function is as follows. Transcriptional activator that binds specific DNA sequence. Functions as a response regulator involved in His-to-Asp phosphorelay signal transduction system. Phosphorylation of the Asp residue in the receiver domain activates the ability of the protein to promote the transcription of target genes. May directly activate some type-A response regulators in response to cytokinins. The protein is Two-component response regulator ORR29 of Oryza sativa subsp. indica (Rice).